We begin with the raw amino-acid sequence, 158 residues long: Endoribonuclease YbeY (158 aa).

3 residues coordinate Zn(2+): His-124, His-128, and His-134.

Belongs to the endoribonuclease YbeY family. Requires Zn(2+) as cofactor.

The protein resides in the cytoplasm. In terms of biological role, single strand-specific metallo-endoribonuclease involved in late-stage 70S ribosome quality control and in maturation of the 3' terminus of the 16S rRNA. This chain is Endoribonuclease YbeY, found in Caldanaerobacter subterraneus subsp. tengcongensis (strain DSM 15242 / JCM 11007 / NBRC 100824 / MB4) (Thermoanaerobacter tengcongensis).